A 161-amino-acid polypeptide reads, in one-letter code: Cytochrome b6-f complex subunit 4 (161 aa).

3 helical membrane-spanning segments follow: residues 37-57 (LLYIFPVVILGSIALCVGLAV), 96-116 (LLGVVLMGSIPLGLMLVPFIE), and 132-152 (TVFLFGTLFTLWLGIGATFPI).

The protein belongs to the cytochrome b family. PetD subfamily. As to quaternary structure, the 4 large subunits of the cytochrome b6-f complex are cytochrome b6, subunit IV (17 kDa polypeptide, PetD), cytochrome f and the Rieske protein, while the 4 small subunits are PetG, PetL, PetM and PetN. The complex functions as a dimer.

The protein localises to the cellular thylakoid membrane. Functionally, component of the cytochrome b6-f complex, which mediates electron transfer between photosystem II (PSII) and photosystem I (PSI), cyclic electron flow around PSI, and state transitions. The protein is Cytochrome b6-f complex subunit 4 of Cyanothece sp. (strain PCC 7425 / ATCC 29141).